A 764-amino-acid chain; its full sequence is Polymeric immunoglobulin receptor (764 aa).

Positions 1-18 are cleaved as a signal peptide; the sequence is MLLFVLTCLLAVFPAIST. Residues 19–120 form the Ig-like V-type 1; required for binding to polymeric IgA and IgM domain; the sequence is KSPIFGPEEV…GLGINSRGLS (102 aa). Residues 19–638 are Extracellular-facing; that stretch reads KSPIFGPEEV…SSEEQGGSSR (620 aa). 2 disulfide bridges follow: cysteine 40-cysteine 110 and cysteine 56-cysteine 64. N-linked (GlcNAc...) asparagine glycans are attached at residues asparagine 83, asparagine 90, asparagine 135, and asparagine 186. Ig-like V-type domains follow at residues 145–237, 250–352, 364–458, and 462–561; these read GRTV…DLQV, RGSV…ESTI, GGSV…IKII, and PNLK…VYVA. 5 cysteine pairs are disulfide-bonded: cysteine 152–cysteine 220, cysteine 257–cysteine 325, cysteine 271–cysteine 279, cysteine 371–cysteine 441, and cysteine 385–cysteine 395. Residue asparagine 421 is glycosylated (N-linked (GlcNAc...) asparagine). N-linked (GlcNAc...) (complex) asparagine glycosylation occurs at asparagine 469. Disulfide bonds link cysteine 482/cysteine 544, cysteine 486/cysteine 520, and cysteine 496/cysteine 503. The N-linked (GlcNAc...) asparagine glycan is linked to asparagine 499. The span at 609 to 619 shows a compositional bias: basic and acidic residues; it reads KAVADTRDQAD. Residues 609–637 are disordered; sequence KAVADTRDQADGSRASVDSGSSEEQGGSS. Low complexity predominate over residues 627–637; it reads SGSSEEQGGSS. Residues 639–661 form a helical membrane-spanning segment; that stretch reads ALVSTLVPLGLVLAVGAVAVGVA. At 662-764 the chain is on the cytoplasmic side; the sequence is RARHRKNVDR…AEAQDGPQEA (103 aa). A phosphoserine mark is found at serine 673, serine 682, serine 689, and serine 735. The segment at 717–738 is disordered; it reads ATTESTTETKEPKKAKRSSKEE. Over residues 723–738 the composition is skewed to basic and acidic residues; the sequence is TETKEPKKAKRSSKEE.

In terms of assembly, interacts (mainly via CDR1-like domain) with dimeric IgA. Interacts (mainly via CDR2-like domain) with pentameric IgM. As to quaternary structure, either free or part of the secretory IgA (sIgA) complex that consists of two, four or five IgA monomers, and two additional non-Ig polypeptides, namely the JCHAIN and the secretory component (the proteolytic product of PIGR). Free secretory component interacts with bacterial antigens toxA of C.difficile and eaeA of E.coli. Post-translationally, N-glycosylated. N-glycosylation is required for anchoring IgA molecules to mucus, but is not necessary for Ig binding.

It is found in the cell membrane. It localises to the secreted. In terms of biological role, mediates selective transcytosis of polymeric IgA and IgM across mucosal epithelial cells. Binds polymeric IgA and IgM at the basolateral surface of epithelial cells. The complex is then transported across the cell to be secreted at the apical surface. During this process, a cleavage occurs that separates the extracellular (known as the secretory component) from the transmembrane segment. Through its N-linked glycans ensures anchoring of secretory IgA (sIgA) molecules to mucus lining the epithelial surface to neutralize extracellular pathogens. On its own (free form) may act as a non-specific microbial scavenger to prevent pathogen interaction with epithelial cells. This chain is Polymeric immunoglobulin receptor (PIGR), found in Homo sapiens (Human).